We begin with the raw amino-acid sequence, 135 residues long: Large ribosomal subunit protein bL19 (135 aa).

The protein belongs to the bacterial ribosomal protein bL19 family.

This protein is located at the 30S-50S ribosomal subunit interface and may play a role in the structure and function of the aminoacyl-tRNA binding site. In Xanthomonas campestris pv. campestris (strain 8004), this protein is Large ribosomal subunit protein bL19.